Reading from the N-terminus, the 304-residue chain is Glycine--tRNA ligase alpha subunit (304 aa).

This sequence belongs to the class-II aminoacyl-tRNA synthetase family. In terms of assembly, tetramer of two alpha and two beta subunits.

It localises to the cytoplasm. It catalyses the reaction tRNA(Gly) + glycine + ATP = glycyl-tRNA(Gly) + AMP + diphosphate. The polypeptide is Glycine--tRNA ligase alpha subunit (Serratia proteamaculans (strain 568)).